A 414-amino-acid polypeptide reads, in one-letter code: MEQPSPVTRQSFDEWIVPTYAPADFIVVRGEGSTLWDQQGKSYIDFAGGIAVNALGHGHPAVRAALIEQADKVWHLGNGYTNEPVLRLAKQLIDATFAEKVFFCNSGAEANEAALKLARKYALDNFANKAGQQGEKNQIVAFRNAFHGRTLFTVSAGGQPKYSQDFAPLPGGIHHGIFNDLASAEQLITDQTCAVIVEPIQGEGGVLPADKEFLHGLRALCDRHNALLIFDEIQTGVGRTGELYAYMHYGVSPDVLTSAKALGGGFPIGAMLTTTKYASALSVGSHGTTFGGNPLACAVAGTVLSLINQPTLLAGVKARHQWFIDELAEINARHNVFAEIRGRGLLIGCVLNAQYAGKSKEIVQAAAQYGLIALIAGPDVVRFAPSLIISPKEIKEGLARLAMGIEQVCQKVTS.

Lysine 260 carries the N6-(pyridoxal phosphate)lysine modification.

The protein belongs to the class-III pyridoxal-phosphate-dependent aminotransferase family. AstC subfamily. The cofactor is pyridoxal 5'-phosphate.

It catalyses the reaction N(2)-succinyl-L-ornithine + 2-oxoglutarate = N-succinyl-L-glutamate 5-semialdehyde + L-glutamate. It functions in the pathway amino-acid degradation; L-arginine degradation via AST pathway; L-glutamate and succinate from L-arginine: step 3/5. Its function is as follows. Catalyzes the transamination of N(2)-succinylornithine and alpha-ketoglutarate into N(2)-succinylglutamate semialdehyde and glutamate. Can also act as an acetylornithine aminotransferase. The chain is Succinylornithine transaminase from Yersinia pseudotuberculosis serotype O:1b (strain IP 31758).